The primary structure comprises 2023 residues: Protein Daple (2023 aa).

The 121-residue stretch at 11–131 folds into the Calponin-homology (CH) domain; that stretch reads NFMDSPLVVW…RMLLLILGCA (121 aa). Coiled-coil stretches lie at residues 250–415, 458–1064, and 1105–1419; these read RQHL…LLEE, NESA…VEKN, and LKQI…QYKF. The tract at residues 1013-1035 is disordered; it reads RHEEEAAHSEISQQTLGQTRSLP. The span at 1022-1033 shows a compositional bias: polar residues; that stretch reads EISQQTLGQTRS. Disordered stretches follow at residues 1441-1824 and 1837-2023; these read KPKK…GSAS and LRSN…YGCV. The segment covering 1442–1460 has biased composition (basic and acidic residues); sequence PKKESSRERPDAPRERIRS. The span at 1478–1491 shows a compositional bias: pro residues; that stretch reads SAPPPPPPPLPPRQ. Composition is skewed to polar residues over residues 1497-1518 and 1564-1585; these read DSMNSQSVEENHVQSPTLSSPA and TCSTPLSRNSHNAPGFTSSSSL. Low complexity-rich tracts occupy residues 1623 to 1643 and 1667 to 1704; these read SAEFSRNTSSSNSPVSSKGSL and RLSQSSLLPRSSTLPCDSPSASRPSQRPASRRPSSPGS. The GBA motif lies at 1700–1728; sequence SSPGSEMVTLEEFLQESNALSPPTVQTGS. Polar residues-rich tracts occupy residues 1714–1727, 1752–1763, 1785–1799, and 1809–1824; these read QESNALSPPTVQTG, TPTNYVTPTVKT, LTDTSTPPSHSQTLP, and ALQQSSPRGSVGGSAS. Positions 1890–1904 are enriched in basic and acidic residues; that stretch reads VDPRRLSLAQPRDEF. A compositionally biased stretch (low complexity) spans 1927 to 1945; sequence GSGSSRAGAARSGSAQPRG. Residues 1974-1988 are compositionally biased toward basic and acidic residues; it reads QEQREAESPLLKKAD. Over residues 1989–2014 the composition is skewed to polar residues; the sequence is TTNLSYASKEQPTSKPASPDPNNDPQ. A PDZ-binding motif is present at residues 2020–2023; the sequence is YGCV.

Belongs to the CCDC88 family.

The protein localises to the cytoplasm. It is found in the cell junction. In terms of biological role, positive regulator of Wnt signaling, acting synergistically with dvl2. Functions upstream of ctnnb1/beta-catenin in the canonical Wnt pathway, and also activates jnk in the Wnt/planar cell polarity (PCP) pathway. Acts as a non-receptor guanine nucleotide exchange factor which binds to and activates guanine nucleotide-binding protein G(i) alpha (Gi-alpha) subunits. This promotes apical cell constriction and subsequent bending of the neural plate during neurulation via arhgef18. The protein is Protein Daple of Danio rerio (Zebrafish).